The chain runs to 349 residues: UPF0324 inner membrane protein YeiH (349 aa).

At 1–12 (MTNITLQKQHRT) the chain is on the periplasmic side. A helical membrane pass occupies residues 13-32 (LWHFIPGLALSAVITGVALW). Residues 33 to 35 (GGS) are Cytoplasmic-facing. A helical membrane pass occupies residues 36 to 58 (IPAVAGAGFSALTLAILLGMVLG). The Periplasmic segment spans residues 59-99 (NTIYPHIWKSCDGGVLFAKQYLLRLGIILYGFRLTFSQIAD). The chain crosses the membrane as a helical span at residues 100-122 (VGISGIIIDVLTLSSTFLLACFL). Residues 123–131 (GQKVFGLDK) are Cytoplasmic-facing. The helical transmembrane segment at 132-151 (HTSWLIGAGSSICGAAAVLA) threads the bilayer. The Periplasmic portion of the chain corresponds to 152–162 (TEPVVKAEASK). The helical transmembrane segment at 163 to 185 (VTVAVATVVIFGTVAIFLYPAIY) threads the bilayer. The Cytoplasmic segment spans residues 186-261 (PLMSQWFSPE…SGANSGEKSK (76 aa)). A helical membrane pass occupies residues 262 to 283 (ITIPWFAILFIVVAIFNSFHLL). At 284–289 (PQSVVN) the chain is on the periplasmic side. A helical membrane pass occupies residues 290-312 (MLVTLDTFLLAMAMAALGLTTHV). Over 313 to 321 (SALKKAGAK) the chain is Cytoplasmic. A helical transmembrane segment spans residues 322–344 (PLLMALVLFAWLIVGGGAINYVI). Over 345-349 (QSVIA) the chain is Periplasmic.

The protein belongs to the UPF0324 family.

Its subcellular location is the cell inner membrane. This Escherichia coli O157:H7 protein is UPF0324 inner membrane protein YeiH (yeiH).